Reading from the N-terminus, the 44-residue chain is MYIFSYEFRKIGGGSNRNNYQLNSAPAFKSSQNTSTQAKPTFSN.

The disordered stretch occupies residues 22-44 (LNSAPAFKSSQNTSTQAKPTFSN).

This is an uncharacterized protein from Dictyostelium discoideum (Social amoeba).